Reading from the N-terminus, the 460-residue chain is Probable carboxylesterase 11 (460 aa).

Polar residues-rich tracts occupy residues 26 to 35 and 132 to 145; these read QSSGDESSSD and NSYG…SPEA. Disordered stretches follow at residues 26–52 and 132–161; these read QSSG…APNP and NSYG…SSGG. Residues 173-175 carry the Involved in the stabilization of the negatively charged intermediate by the formation of the oxyanion hole motif; it reads HGG. Catalysis depends on residues Ser289, Asp392, and His422.

It belongs to the 'GDXG' lipolytic enzyme family. In terms of tissue distribution, expressed in roots, leaves, stems, flowers and siliques.

The catalysed reaction is a carboxylic ester + H2O = an alcohol + a carboxylate + H(+). Functionally, carboxylesterase acting on esters with varying acyl chain length. This is Probable carboxylesterase 11 (CXE11) from Arabidopsis thaliana (Mouse-ear cress).